The following is a 168-amino-acid chain: Ribosome-binding factor A (168 aa).

Over residues 122-136 (VRRDARPAGDDDPYR) the composition is skewed to basic and acidic residues. Residues 122–168 (VRRDARPAGDDDPYRRPRPAAGEVDELSEVDELSEVDEYGGTARQEG) form a disordered region. A compositionally biased stretch (acidic residues) spans 144–159 (EVDELSEVDELSEVDE).

The protein belongs to the RbfA family. In terms of assembly, monomer. Binds 30S ribosomal subunits, but not 50S ribosomal subunits or 70S ribosomes.

The protein resides in the cytoplasm. In terms of biological role, one of several proteins that assist in the late maturation steps of the functional core of the 30S ribosomal subunit. Associates with free 30S ribosomal subunits (but not with 30S subunits that are part of 70S ribosomes or polysomes). Required for efficient processing of 16S rRNA. May interact with the 5'-terminal helix region of 16S rRNA. This chain is Ribosome-binding factor A, found in Frankia casuarinae (strain DSM 45818 / CECT 9043 / HFP020203 / CcI3).